The sequence spans 567 residues: MAEANQLFKEFKIQSVSEFFRRNAAMLGYTGKVRSLTTLVHEAVTNSLDACEEAGIPPYVRVEIEELGNEHYKVVVEDNGPGIPEKYITHVFGKMLAGTKAHRNIQSRGQQGIGISGAVMFAQITSGKATRVITSTGNDEIIEAWVKIDVDKNEGKIVKKEKHPNPKGWRGTRIELEVKNVKYMRSKQGVFWYLKLTAIANPHAHIELIEPDGKLIVFPRSSDYIPEPPVEMKPHPKGVLTDDVYRLAKKTRRNTVRRFLIGEFSRISDKKVDELIEYIAALRLIKTVEDKKLQEQYYQKLMEGHVKAVLRAFKGYTKVVKQVAKMMEKPPEKLTWHEAEEIVEAFKYMKFLAPPTHGLRPIGEENIEKGLKGILKPEFVTAVTRPPKVYSGGIPFQVEVGIAYGGEIPAGFDLYRYANRVPLLFDAGSCVTTQAARSIDWKRYKIDDLDRAPLVLMINVVSVHVPYTGTGKQSIASVDEIYNEIRLAIMDAARRLQTYLSGKHRKLAQVKRRKTFEKYVPEIARALSILTGEPEEKIREYFIRFIESKFASAEVEEVAAEEVAENA.

Residues Asn46, Asp78, 99 to 100, 109 to 116, and Lys472 contribute to the ATP site; these read TK and GQQGIGIS.

This sequence belongs to the TOP6B family. As to quaternary structure, homodimer. Heterotetramer of two Top6A and two Top6B chains.

The enzyme catalyses ATP-dependent breakage, passage and rejoining of double-stranded DNA.. Its function is as follows. Relaxes both positive and negative superturns and exhibits a strong decatenase activity. The polypeptide is Type 2 DNA topoisomerase 6 subunit B (Thermococcus kodakarensis (strain ATCC BAA-918 / JCM 12380 / KOD1) (Pyrococcus kodakaraensis (strain KOD1))).